We begin with the raw amino-acid sequence, 513 residues long: ATP synthase subunit alpha 1 (513 aa).

169–176 (GDRQCGKT) provides a ligand contact to ATP.

This sequence belongs to the ATPase alpha/beta chains family. F-type ATPases have 2 components, CF(1) - the catalytic core - and CF(0) - the membrane proton channel. CF(1) has five subunits: alpha(3), beta(3), gamma(1), delta(1), epsilon(1). CF(0) has three main subunits: a(1), b(2) and c(9-12). The alpha and beta chains form an alternating ring which encloses part of the gamma chain. CF(1) is attached to CF(0) by a central stalk formed by the gamma and epsilon chains, while a peripheral stalk is formed by the delta and b chains.

It is found in the cell inner membrane. The catalysed reaction is ATP + H2O + 4 H(+)(in) = ADP + phosphate + 5 H(+)(out). Produces ATP from ADP in the presence of a proton gradient across the membrane. The alpha chain is a regulatory subunit. The chain is ATP synthase subunit alpha 1 from Burkholderia pseudomallei (strain 1710b).